A 262-amino-acid chain; its full sequence is Acyl-coenzyme A diphosphatase FITM2 (262 aa).

The Cytoplasmic portion of the chain corresponds to 1-23 (MEHLERCEWLLRGTLVRAAVRRY). A helical membrane pass occupies residues 24–44 (LPWALVASMLAGSLLKELSPL). At 45-57 (PESYLSNKRNVLN) the chain is on the lumenal side. A helical membrane pass occupies residues 58–78 (VYFVKVAWAWTFCLLLPFIAL). The Cytoplasmic segment spans residues 79–93 (TNYHLTGKAGLVLRR). The helical transmembrane segment at 94–114 (LSTLLVGTAIWYICTSIFSNI) threads the bilayer. Residues 115 to 145 (EHYTGSCYQSPALEGVRKEHQSKQQCHQEGG) lie on the Lumenal side of the membrane. Residues 146–166 (FWHGFDISGHSFLLTFCALMI) traverse the membrane as a helical segment. Residue H155 is part of the active site. The Cytoplasmic portion of the chain corresponds to 167-190 (VEEMSVLHEVKTDRSHCLHTAITT). The helical transmembrane segment at 191–211 (LVVALGILTFIWVLMFLCTAV) threads the bilayer. At 212–218 (YFHNLSQ) the chain is on the lumenal side. The active site involves H214. A helical membrane pass occupies residues 219-239 (KVFGTLFGLLSWYGTYGFWYP). Residues 240–262 (KAFSPGLPPQSCSLNLKQDSYKK) are Cytoplasmic-facing.

This sequence belongs to the FIT family. FIT2 subfamily. As to expression, widely expressed.

The protein resides in the endoplasmic reticulum membrane. It catalyses the reaction an acyl-CoA + H2O = an acyl-4'-phosphopantetheine + adenosine 3',5'-bisphosphate + 2 H(+). The enzyme catalyses (9Z)-octadecenoyl-CoA + H2O = S-(9Z-octadecenoyl)-4'-phosphopantetheine + adenosine 3',5'-bisphosphate + 2 H(+). The catalysed reaction is (5Z,8Z,11Z,14Z)-eicosatetraenoyl-CoA + H2O = S-(5Z,8Z,11Z,14Z-eicosatetraenoyl)-4'-phosphopantetheine + adenosine 3',5'-bisphosphate + 2 H(+). It carries out the reaction hexadecanoyl-CoA + H2O = S-hexadecanoyl-4'-phosphopantetheine + adenosine 3',5'-bisphosphate + 2 H(+). In terms of biological role, fatty acyl-coenzyme A (CoA) diphosphatase that hydrolyzes fatty acyl-CoA to yield acyl-4'-phosphopantetheine and adenosine 3',5'-bisphosphate. Preferentially hydrolyzes unsaturated long-chain acyl-CoA substrates such as oleoyl-CoA/(9Z)-octadecenoyl-CoA and arachidonoyl-CoA/(5Z,8Z,11Z,14Z)-eicosatetraenoyl-CoA in the endoplasmic reticulum (ER) lumen. This catalytic activity is required for maintaining ER structure and for lipid droplets (LDs) biogenesis, which are lipid storage organelles involved in maintaining lipid and energy homeostasis. Directly binds to diacylglycerol (DAGs) and triacylglycerol, which is also important for LD biogenesis. May support directional budding of nacent LDs from the ER into the cytosol by reducing DAG levels at sites of LD formation. Plays a role in the regulation of cell morphology and cytoskeletal organization. The sequence is that of Acyl-coenzyme A diphosphatase FITM2 from Homo sapiens (Human).